Reading from the N-terminus, the 54-residue chain is ATP synthase protein 8 (54 aa).

A helical membrane pass occupies residues 8–28 (WWIINFFIIWTAILLTLVILV).

Belongs to the ATPase protein 8 family. F-type ATPases have 2 components, CF(1) - the catalytic core - and CF(0) - the membrane proton channel.

Its subcellular location is the mitochondrion membrane. Functionally, mitochondrial membrane ATP synthase (F(1)F(0) ATP synthase or Complex V) produces ATP from ADP in the presence of a proton gradient across the membrane which is generated by electron transport complexes of the respiratory chain. F-type ATPases consist of two structural domains, F(1) - containing the extramembraneous catalytic core and F(0) - containing the membrane proton channel, linked together by a central stalk and a peripheral stalk. During catalysis, ATP synthesis in the catalytic domain of F(1) is coupled via a rotary mechanism of the central stalk subunits to proton translocation. Part of the complex F(0) domain. Minor subunit located with subunit a in the membrane. This Paracentrotus lividus (Common sea urchin) protein is ATP synthase protein 8 (MT-ATP8).